The following is a 200-amino-acid chain: GTP cyclohydrolase 1 (200 aa).

Positions 87, 90, and 158 each coordinate Zn(2+).

Belongs to the GTP cyclohydrolase I family. Toroid-shaped homodecamer, composed of two pentamers of five dimers.

The enzyme catalyses GTP + H2O = 7,8-dihydroneopterin 3'-triphosphate + formate + H(+). It participates in cofactor biosynthesis; 7,8-dihydroneopterin triphosphate biosynthesis; 7,8-dihydroneopterin triphosphate from GTP: step 1/1. This Xanthomonas euvesicatoria pv. vesicatoria (strain 85-10) (Xanthomonas campestris pv. vesicatoria) protein is GTP cyclohydrolase 1.